Here is a 413-residue protein sequence, read N- to C-terminus: Serine hydroxymethyltransferase (413 aa).

(6S)-5,6,7,8-tetrahydrofolate is bound by residues L118 and 122–124 (GHL). Residue K228 is modified to N6-(pyridoxal phosphate)lysine.

The protein belongs to the SHMT family. As to quaternary structure, homodimer. It depends on pyridoxal 5'-phosphate as a cofactor.

The protein resides in the cytoplasm. It catalyses the reaction (6R)-5,10-methylene-5,6,7,8-tetrahydrofolate + glycine + H2O = (6S)-5,6,7,8-tetrahydrofolate + L-serine. Its pathway is one-carbon metabolism; tetrahydrofolate interconversion. The protein operates within amino-acid biosynthesis; glycine biosynthesis; glycine from L-serine: step 1/1. Functionally, catalyzes the reversible interconversion of serine and glycine with tetrahydrofolate (THF) serving as the one-carbon carrier. This reaction serves as the major source of one-carbon groups required for the biosynthesis of purines, thymidylate, methionine, and other important biomolecules. Also exhibits THF-independent aldolase activity toward beta-hydroxyamino acids, producing glycine and aldehydes, via a retro-aldol mechanism. This Phytoplasma australiense protein is Serine hydroxymethyltransferase.